The chain runs to 346 residues: D-alanine--D-alanine ligase (346 aa).

The ATP-grasp domain occupies 133 to 324 (KLYAQSVGVK…IVDNLAKNIE (192 aa)). 159-211 (LSFPCILKPARLGSSIGISIVKDESELKYAKDVAFEFDEDVVVEQFVSNIKEY) contributes to the ATP binding site. Mg(2+) contacts are provided by Asp-284, Glu-296, and Asn-298.

The protein belongs to the D-alanine--D-alanine ligase family. Mg(2+) is required as a cofactor. It depends on Mn(2+) as a cofactor.

The protein localises to the cytoplasm. It catalyses the reaction 2 D-alanine + ATP = D-alanyl-D-alanine + ADP + phosphate + H(+). The protein operates within cell wall biogenesis; peptidoglycan biosynthesis. Cell wall formation. This Campylobacter lari (strain RM2100 / D67 / ATCC BAA-1060) protein is D-alanine--D-alanine ligase.